A 390-amino-acid chain; its full sequence is Chorismate synthase 1 (390 aa).

The NADP(+) site is built by Arg-39 and Arg-45. Residues 95-117 (EQEEKEMKRKVTKPRPGHADLNG) are disordered. FMN contacts are provided by residues 132–134 (RSS), 253–254 (NA), Gly-298, 313–317 (KPIPT), and Arg-339.

The protein belongs to the chorismate synthase family. In terms of assembly, homotetramer. Requires FMNH2 as cofactor.

It catalyses the reaction 5-O-(1-carboxyvinyl)-3-phosphoshikimate = chorismate + phosphate. It functions in the pathway metabolic intermediate biosynthesis; chorismate biosynthesis; chorismate from D-erythrose 4-phosphate and phosphoenolpyruvate: step 7/7. Catalyzes the anti-1,4-elimination of the C-3 phosphate and the C-6 proR hydrogen from 5-enolpyruvylshikimate-3-phosphate (EPSP) to yield chorismate, which is the branch point compound that serves as the starting substrate for the three terminal pathways of aromatic amino acid biosynthesis. This reaction introduces a second double bond into the aromatic ring system. This chain is Chorismate synthase 1, found in Bacillus thuringiensis (strain Al Hakam).